Consider the following 403-residue polypeptide: FAD-dependent monooxygenase tazP (403 aa).

Positions 75, 144, 354, and 367 each coordinate FAD.

The protein belongs to the paxM FAD-dependent monooxygenase family. FAD serves as cofactor.

The protein operates within secondary metabolite biosynthesis. Functionally, FAD-dependent monooxygenase; part of the gene cluster that mediates the biosynthesis of azaterrilone A and other azaphilones, a class of fungal metabolites characterized by a highly oxygenated pyrano-quinone bicyclic core and exhibiting a broad range of bioactivities. The first step of the pathway begins with the non-reducing polyketide synthase tazA that assembles one acetyl-CoA starter unit, five malonyl-CoA units, and catalyzes a series of Claisen condensations, methylation, PT-mediated cyclization, and finally releases the first hexaketide precursor through the R-domain. The tazA product then undergoes reduction on its terminal ketone and the following pyran-ring formation by yet undetermined enzyme(s). Dehydration and enoyl reduction, possibly involving the trans-enoyl reductase tazE leads to the next intermediate. TazD is predicted as an acetyltransferase and might catalyze the acetylation steps leading to the synthesis of azaterrilone A. Azaterrilone A is not the final product of the taz pathway and both the highly reducing polyketide synthase tazB and the dual enzyme tazHJ catalyze late steps of the pathway, leading to the production of the 2 final stereoisomers that contain additional polyketide modification whose structures have still to be determined. In Aspergillus terreus (strain NIH 2624 / FGSC A1156), this protein is FAD-dependent monooxygenase tazP.